A 290-amino-acid chain; its full sequence is Putative heme oxygenase 3 (290 aa).

Acidic residues predominate over residues 1–12; it reads MSSEVETAEAVD. The tract at residues 1-33 is disordered; the sequence is MSSEVETAEAVDESEKNSMASEKENHSKIADFS. Residues 13 to 33 are compositionally biased toward basic and acidic residues; the sequence is ESEKNSMASEKENHSKIADFS. HRM repeat units follow at residues 238–243 and 255–260; these read KCPFNA and NCPFQM.

Belongs to the heme oxygenase family. In terms of tissue distribution, found in the spleen, liver, thymus, prostate, heart, kidney, brain and testis.

The enzyme catalyses heme b + 3 reduced [NADPH--hemoprotein reductase] + 3 O2 = biliverdin IXalpha + CO + Fe(2+) + 3 oxidized [NADPH--hemoprotein reductase] + 3 H2O + H(+). Its function is as follows. Heme oxygenase cleaves the heme ring at the alpha methene bridge to form biliverdin. Biliverdin is subsequently converted to bilirubin by biliverdin reductase. Heme oxygenase 3 could be implicated in some heme-dependent regulatory role in the cell. This is Putative heme oxygenase 3 (Hmox3) from Rattus norvegicus (Rat).